The following is a 557-amino-acid chain: 2-succinyl-5-enolpyruvyl-6-hydroxy-3-cyclohexene-1-carboxylate synthase (557 aa).

The protein belongs to the TPP enzyme family. MenD subfamily. As to quaternary structure, homodimer. Requires Mg(2+) as cofactor. The cofactor is Mn(2+). It depends on thiamine diphosphate as a cofactor.

It carries out the reaction isochorismate + 2-oxoglutarate + H(+) = 5-enolpyruvoyl-6-hydroxy-2-succinyl-cyclohex-3-ene-1-carboxylate + CO2. It participates in quinol/quinone metabolism; 1,4-dihydroxy-2-naphthoate biosynthesis; 1,4-dihydroxy-2-naphthoate from chorismate: step 2/7. It functions in the pathway quinol/quinone metabolism; menaquinone biosynthesis. Functionally, catalyzes the thiamine diphosphate-dependent decarboxylation of 2-oxoglutarate and the subsequent addition of the resulting succinic semialdehyde-thiamine pyrophosphate anion to isochorismate to yield 2-succinyl-5-enolpyruvyl-6-hydroxy-3-cyclohexene-1-carboxylate (SEPHCHC). The chain is 2-succinyl-5-enolpyruvyl-6-hydroxy-3-cyclohexene-1-carboxylate synthase from Yersinia enterocolitica serotype O:8 / biotype 1B (strain NCTC 13174 / 8081).